Consider the following 385-residue polypeptide: UDP-4-amino-4-deoxy-L-arabinose--oxoglutarate aminotransferase (385 aa).

Lysine 188 serves as the catalytic Proton acceptor. Lysine 188 is subject to N6-(pyridoxal phosphate)lysine.

Belongs to the DegT/DnrJ/EryC1 family. ArnB subfamily. In terms of assembly, homodimer. Requires pyridoxal 5'-phosphate as cofactor.

The catalysed reaction is UDP-4-amino-4-deoxy-beta-L-arabinose + 2-oxoglutarate = UDP-beta-L-threo-pentopyranos-4-ulose + L-glutamate. It participates in nucleotide-sugar biosynthesis; UDP-4-deoxy-4-formamido-beta-L-arabinose biosynthesis; UDP-4-deoxy-4-formamido-beta-L-arabinose from UDP-alpha-D-glucuronate: step 2/3. The protein operates within bacterial outer membrane biogenesis; lipopolysaccharide biosynthesis. Its activity is regulated as follows. Inhibited by L-cycloserine. Functionally, catalyzes the conversion of UDP-4-keto-arabinose (UDP-Ara4O) to UDP-4-amino-4-deoxy-L-arabinose (UDP-L-Ara4N). The modified arabinose is attached to lipid A and is required for resistance to polymyxin and cationic antimicrobial peptides. This chain is UDP-4-amino-4-deoxy-L-arabinose--oxoglutarate aminotransferase (arnB), found in Salmonella typhimurium (strain LT2 / SGSC1412 / ATCC 700720).